A 375-amino-acid polypeptide reads, in one-letter code: MDALRLANSAFAVDLFKQLCERDPAGNILFSPICLSTSLSLAQVGTKGDTANEIGQVLHFENVKDVPFGFQTVTSDVNKLSSFYSLKLVKRLYIDKSLNPSTEFISSTKRPYAKELETVDFKDKLEETKGQINSSIKELTDGHFEDILSENSISDQTKILVVNAAYFVGKWMKKFPESETKECPFRISKTDTKPVQMMNLEATFCLGNIDDISCKIIELPFQNKHLSMLIVLPKDVEDESTGLEKIEQQLNPETLLQWTNPSTMANAKVKLSLPKFKVEKMIDPKASLESLGLKSLFNESTSDFSGMSETKGVSLSNVIHRVCLEITEDGGESIEVPGSRILQHKDEFNADHPFIYIIRHNKTRNIIFFGKFCSP.

N-linked (GlcNAc...) asparagine glycosylation is found at N133, N298, and N361.

Belongs to the serpin family. Ov-serpin subfamily. Interacts with IRF6.

Its subcellular location is the secreted. The protein localises to the extracellular space. Tumor suppressor. It blocks the growth, invasion, and metastatic properties of mammary tumors. As it does not undergo the S (stressed) to R (relaxed) conformational transition characteristic of active serpins, it exhibits no serine protease inhibitory activity. The sequence is that of Serpin B5 (Serpinb5) from Mus musculus (Mouse).